The sequence spans 561 residues: DNA ligase B (561 aa).

K124 acts as the N6-AMP-lysine intermediate in catalysis.

Belongs to the NAD-dependent DNA ligase family. LigB subfamily.

It catalyses the reaction NAD(+) + (deoxyribonucleotide)n-3'-hydroxyl + 5'-phospho-(deoxyribonucleotide)m = (deoxyribonucleotide)n+m + AMP + beta-nicotinamide D-nucleotide.. Functionally, catalyzes the formation of phosphodiester linkages between 5'-phosphoryl and 3'-hydroxyl groups in double-stranded DNA using NAD as a coenzyme and as the energy source for the reaction. The protein is DNA ligase B of Cronobacter sakazakii (strain ATCC BAA-894) (Enterobacter sakazakii).